The sequence spans 231 residues: L-ribulose-5-phosphate 4-epimerase SgbE (231 aa).

Substrate contacts are provided by residues glycine 27–asparagine 28, serine 44–glycine 45, and serine 74–serine 75. Residues aspartate 76, histidine 95, and histidine 97 each coordinate Zn(2+). Residue aspartate 120 is the Proton donor/acceptor of the active site. Residue histidine 171 coordinates Zn(2+). The Proton donor/acceptor role is filled by tyrosine 229.

It belongs to the aldolase class II family. AraD/FucA subfamily. The cofactor is Zn(2+).

The enzyme catalyses L-ribulose 5-phosphate = D-xylulose 5-phosphate. Its function is as follows. Catalyzes the interconversion of L-ribulose 5-phosphate (LRu5P) and D-xylulose 5-phosphate (D-Xu5P) via a retroaldol/aldol mechanism (carbon-carbon bond cleavage analogous to a class II aldolase reaction). May be involved in the utilization of 2,3-diketo-L-gulonate. The polypeptide is L-ribulose-5-phosphate 4-epimerase SgbE (Haemophilus influenzae (strain ATCC 51907 / DSM 11121 / KW20 / Rd)).